The primary structure comprises 147 residues: Deoxyuridine 5'-triphosphate nucleotidohydrolase (147 aa).

Arginine 24 is a binding site for Mg(2+). DUTP contacts are provided by residues 68–70, 82–85, tyrosine 88, glycine 93, isoleucine 95, and arginine 111; these read PRS and GVID.

Belongs to the dUTPase family. Mg(2+) is required as a cofactor.

The enzyme catalyses dUTP + H2O = dUMP + diphosphate + H(+). This enzyme is involved in nucleotide metabolism: it produces dUMP, the immediate precursor of thymidine nucleotides and it decreases the intracellular concentration of dUTP so that uracil cannot be incorporated into DNA. The sequence is that of Deoxyuridine 5'-triphosphate nucleotidohydrolase (OPG046) from Homo sapiens (Human).